The chain runs to 266 residues: Sesquipedalian-1 (266 aa).

Residues 17–113 (PVDNAGFLYK…WVKALSRASF (97 aa)) enclose the PH domain. Residues 165–184 (QPSVAPQRPPPLPPRRRASA) form a disordered region. At Ser-183 the chain carries Phosphoserine. Residues 191-203 (SFAQLHARYGLEV) carry the F&amp;H motif.

It belongs to the sesquipedalian family. Forms homodimers and heterodimers with PHETA2. Interacts with OCRL and INPP5B. Interaction with OCRL may be important for endosomal morphology and function.

Its subcellular location is the early endosome. It localises to the recycling endosome. The protein resides in the golgi apparatus. It is found in the trans-Golgi network. The protein localises to the cytoplasmic vesicle. Its subcellular location is the clathrin-coated vesicle. Functionally, plays a role in endocytic trafficking. Required for receptor recycling from endosomes, both to the trans-Golgi network and the plasma membrane. The chain is Sesquipedalian-1 from Mus musculus (Mouse).